The chain runs to 163 residues: Phosphopantetheine adenylyltransferase (163 aa).

S10 contributes to the substrate binding site. Residues 10–11 (SF) and H18 contribute to the ATP site. Residues K42, L78, and K92 each contribute to the substrate site. ATP-binding positions include 93–95 (GVR), E103, and 127–133 (HAHVSSS).

It belongs to the bacterial CoaD family. Homohexamer. Mg(2+) is required as a cofactor.

Its subcellular location is the cytoplasm. It carries out the reaction (R)-4'-phosphopantetheine + ATP + H(+) = 3'-dephospho-CoA + diphosphate. Its pathway is cofactor biosynthesis; coenzyme A biosynthesis; CoA from (R)-pantothenate: step 4/5. Reversibly transfers an adenylyl group from ATP to 4'-phosphopantetheine, yielding dephospho-CoA (dPCoA) and pyrophosphate. The sequence is that of Phosphopantetheine adenylyltransferase from Clavibacter michiganensis subsp. michiganensis (strain NCPPB 382).